A 117-amino-acid chain; its full sequence is MTRIKRGYIARRRRTKLRLFASSFRGAHSRLTRTMTQQRIRALVSAHRDRGKRKRDFRRLWITRLNAVIHETGVFHSYNRFIHNLYKKQLLLNRKILAQIALLNRSCLYTISNEIKE.

It belongs to the bacterial ribosomal protein bL20 family.

The protein localises to the plastid. It is found in the chloroplast. In terms of biological role, binds directly to 23S ribosomal RNA and is necessary for the in vitro assembly process of the 50S ribosomal subunit. It is not involved in the protein synthesizing functions of that subunit. The chain is Large ribosomal subunit protein bL20c from Arabis hirsuta (Hairy rock-cress).